Reading from the N-terminus, the 851-residue chain is Transforming growth factor beta receptor type 3 (851 aa).

A signal peptide spans M1–A20. Over G21–V787 the chain is Extracellular. A disulfide bridge connects residues C52 and C197. Residues N141 and N492 are each glycosylated (N-linked (GlcNAc...) asparagine). Residues K455–C730 form the ZP domain. O-linked (Xyl...) (glycosaminoglycan) serine glycosylation is found at S534 and S545. N-linked (GlcNAc...) asparagine glycans are attached at residues N571, N590, and N697. 3 disulfide bridges follow: C639–C705, C660–C730, and C710–C723. Residues I737–P751 are interaction with TGF-beta ligand. Residues M788–Y809 form a helical membrane-spanning segment. Topologically, residues S810 to A851 are cytoplasmic. Positions A816–A851 are disordered. Residues G817–A834 are compositionally biased toward polar residues. Residues S836–A851 are compositionally biased toward low complexity. T840 is modified (phosphothreonine).

As to quaternary structure, forms homodimers and homooligomers. Interacts with DYNLT4. Interacts with integrin ITGA5:ITGB1; this interaction promotes the internalization and trafficking of ITGA5:ITGB1 into endocytic vesicles. Interacts with TGFB1, BMP2, BMP5, BMP7 or GDF5 and inhibin A via the ligand binding domains. Interacts with ALK3/BMPR1A; this interaction results in the cell surface retention of BMPR1A. Interacts with ALK6/BMPR1B; this interaction enhances BMPR1B-mediated stimulation of the BMP signaling pathway. Interacts with the scaffolding protein beta-arrestin2/ARRB2; this interaction mediates internalization of TGFBR3 and thus regulates migration, actin cytoskeleton and activation of CDC42. (Microbial infection) Interacts with human cytomegalovirus trimer complex composed of gH, gL, and gO; these interactions may promote HCMV cell entry in specific cell types. Post-translationally, extensively modified by glycosaminoglycan groups (GAG). Phosphorylated in the cytoplasmic domain by the type II receptor TGFBR2 at THR-840 to mediate recruitment of ARRB2 and subsequent internalization of TGFBR2 and TGFBR3.

Its subcellular location is the cell membrane. It localises to the secreted. The protein resides in the extracellular space. The protein localises to the extracellular matrix. Functionally, cell surface receptor that regulates diverse cellular processes including cell proliferation, differentiation, migration, and apoptosis. Initiates BMP, inhibin, and TGF-beta signaling pathways by interacting with different ligands including TGFB1, BMP2, BMP5, BMP7 or GDF5. Alternatively, acts as a cell surface coreceptor for BMP ligands, serving to enhance ligand binding by differentially regulating BMPR1A/ALK3 and BMPR1B/ALK6 receptor trafficking. Promotes epithelial cell adhesion, focal adhesion formation and integrin signaling during epithelial cell spreading on fibronectin. By interacting with the scaffolding protein beta-arrestin2/ARRB2, regulates migration or actin cytoskeleton and promotes the activation of CDC42 as well as the inhibition of NF-kappa-B. In gonadotrope cells, acts as an inhibin A coreceptor and regulates follicle-stimulating hormone (FSH) levels and female fertility. Plays a role in the inhibition of directed and random cell migration in epithelial cells by altering the actin cytoskeletal organization. Participates in epithelial-mesenchymal transformation (EMT) upon binding to BMP2 or TGFB2, by activating the PAR6/SMURF1/RHOA pathway. (Microbial infection) May act as a receptor for human cytomegalovirus in different cell types by interacting with HCMV trimer composed of GO, GH and GL. The chain is Transforming growth factor beta receptor type 3 from Homo sapiens (Human).